Here is a 288-residue protein sequence, read N- to C-terminus: Lipoyl synthase (288 aa).

Cys-39, Cys-44, Cys-50, Cys-65, Cys-69, Cys-72, and Ser-276 together coordinate [4Fe-4S] cluster. Positions 51-265 (WGKGTATFMI…KETGLKKGFE (215 aa)) constitute a Radical SAM core domain.

This sequence belongs to the radical SAM superfamily. Lipoyl synthase family. Requires [4Fe-4S] cluster as cofactor.

It is found in the cytoplasm. The catalysed reaction is [[Fe-S] cluster scaffold protein carrying a second [4Fe-4S](2+) cluster] + N(6)-octanoyl-L-lysyl-[protein] + 2 oxidized [2Fe-2S]-[ferredoxin] + 2 S-adenosyl-L-methionine + 4 H(+) = [[Fe-S] cluster scaffold protein] + N(6)-[(R)-dihydrolipoyl]-L-lysyl-[protein] + 4 Fe(3+) + 2 hydrogen sulfide + 2 5'-deoxyadenosine + 2 L-methionine + 2 reduced [2Fe-2S]-[ferredoxin]. It functions in the pathway protein modification; protein lipoylation via endogenous pathway; protein N(6)-(lipoyl)lysine from octanoyl-[acyl-carrier-protein]: step 2/2. Its function is as follows. Catalyzes the radical-mediated insertion of two sulfur atoms into the C-6 and C-8 positions of the octanoyl moiety bound to the lipoyl domains of lipoate-dependent enzymes, thereby converting the octanoylated domains into lipoylated derivatives. This is Lipoyl synthase from Bacteroides fragilis (strain YCH46).